Reading from the N-terminus, the 126-residue chain is Large ribosomal subunit protein mL55 (126 aa).

The transit peptide at 1 to 34 (MSAKGSLLRLLWQCGMTRAAPESCRYLYTSSWRA) directs the protein to the mitochondrion. Phosphoserine is present on Ser86.

The protein belongs to the mitochondrion-specific ribosomal protein mL55 family. As to quaternary structure, component of the mitochondrial ribosome large subunit (39S) which comprises a 16S rRNA and about 50 distinct proteins.

The protein resides in the mitochondrion. In Bos taurus (Bovine), this protein is Large ribosomal subunit protein mL55 (MRPL55).